Here is a 579-residue protein sequence, read N- to C-terminus: Probable cytochrome c oxidase subunit 1-alpha (579 aa).

A disordered region spans residues 1 to 21 (MSILNEPQGAAAAEDSYENEL). The chain crosses the membrane as a helical span at residues 44-64 (IGTLYLVTSFAFFCIGGVMAL). His90 contributes to the Fe(II)-heme a binding site. Helical transmembrane passes span 93–113 (IMLL…IMPL), 125–145 (LNMF…GGFL), 174–194 (MWIM…VNFI), 217–237 (VLLT…ALFA), 262–282 (LFWF…FGII), and 295–315 (FGYM…VTVW). Cu cation-binding residues include His268 and Tyr272. The segment at residues 268 to 272 (HPEVY) is a cross-link (1'-histidyl-3'-tyrosine (His-Tyr)). Cu cation-binding residues include His317 and His318. The next 5 helical transmembrane spans lie at 319–339 (MYVT…LIAV), 363–383 (MLWA…GVIL), 397–417 (FVVA…MFSG), 437–457 (ITFW…HWLG), and 480–500 (ISTI…YNVW). His401 serves as a coordination point for heme a3. Residue His403 participates in Fe(II)-heme a binding.

Belongs to the heme-copper respiratory oxidase family. As to quaternary structure, associates with subunits II, III and IV to form cytochrome c oxidase. Requires Cu(2+) as cofactor. Heme serves as cofactor.

It localises to the cell membrane. It carries out the reaction 4 Fe(II)-[cytochrome c] + O2 + 8 H(+)(in) = 4 Fe(III)-[cytochrome c] + 2 H2O + 4 H(+)(out). The protein operates within energy metabolism; oxidative phosphorylation. Functionally, cytochrome c oxidase is the component of the respiratory chain that catalyzes the reduction of oxygen to water. Subunits 1-3 form the functional core of the enzyme complex. CO I is the catalytic subunit of the enzyme. Electrons originating in cytochrome c are transferred via the copper A center of subunit 2 and heme A of subunit 1 to the bimetallic center formed by heme A3 and copper B. This is Probable cytochrome c oxidase subunit 1-alpha (ctaD1) from Streptomyces avermitilis (strain ATCC 31267 / DSM 46492 / JCM 5070 / NBRC 14893 / NCIMB 12804 / NRRL 8165 / MA-4680).